The chain runs to 193 residues: General stress protein 16U (193 aa).

It belongs to the CAPAB/TerDEXZ family.

This is General stress protein 16U (yceD) from Bacillus subtilis (strain 168).